Reading from the N-terminus, the 619-residue chain is Replication restart protein PriA (619 aa).

One can recognise a Helicase ATP-binding domain in the interval 119–285 (LKELQKHSAS…KDKALVRLKG (167 aa)). ATP is bound at residue 132–139 (GDTGSGKT). Residues 228–231 (DEEH) carry the DEAH box motif. 8 residues coordinate Zn(2+): C336, C339, C345, C348, C363, C366, C376, and C379. Residues 371 to 532 (PIPKICSACQ…ELYPPFSRLC (162 aa)) enclose the Helicase C-terminal domain.

This sequence belongs to the helicase family. PriA subfamily. Component of the replication restart primosome. Zn(2+) is required as a cofactor.

It catalyses the reaction Couples ATP hydrolysis with the unwinding of duplex DNA by translocating in the 3'-5' direction.. The enzyme catalyses ATP + H2O = ADP + phosphate + H(+). Its function is as follows. Initiates the restart of stalled replication forks, which reloads the replicative helicase on sites other than the origin of replication. Recognizes and binds to abandoned replication forks and remodels them to uncover a helicase loading site. Promotes assembly of the primosome at these replication forks. In terms of biological role, important for survival of the bacteria in host cells. The sequence is that of Replication restart protein PriA from Helicobacter pylori (strain ATCC 700392 / 26695) (Campylobacter pylori).